The chain runs to 943 residues: Translation initiation factor IF-2 (943 aa).

Residues 29-349 (LSVKSHSSSV…NNRGNSAPKL (321 aa)) form a disordered region. Composition is skewed to basic and acidic residues over residues 69–82 (PKEE…DKAS), 112–137 (FKAE…DNRN), 145–155 (QGKRHNNDRRN), 163–196 (DHNK…RDNA), and 224–253 (RQSE…EKQQ). A compositionally biased stretch (low complexity) spans 254 to 266 (AEVAVQKAAAETK). Over residues 296-309 (KSRDNHRVNEDGPK) the composition is skewed to basic and acidic residues. Residues 313-332 (NNKWNNQNQVRNQRNSNWNK) are compositionally biased toward low complexity. Residues 445–614 (ERAPVVTIMG…LLVAEVEELK (170 aa)) form the tr-type G domain. The interval 454–461 (GHVDHGKT) is G1. 454–461 (GHVDHGKT) contacts GTP. The G2 stretch occupies residues 479–483 (GITQH). Residues 500 to 503 (DTPG) are G3. GTP-binding positions include 500 to 504 (DTPGH) and 554 to 557 (NKID). Positions 554–557 (NKID) are G4. Residues 590–592 (SAK) form a G5 region.

It belongs to the TRAFAC class translation factor GTPase superfamily. Classic translation factor GTPase family. IF-2 subfamily.

It is found in the cytoplasm. One of the essential components for the initiation of protein synthesis. Protects formylmethionyl-tRNA from spontaneous hydrolysis and promotes its binding to the 30S ribosomal subunits. Also involved in the hydrolysis of GTP during the formation of the 70S ribosomal complex. This Streptococcus thermophilus (strain ATCC BAA-491 / LMD-9) protein is Translation initiation factor IF-2.